We begin with the raw amino-acid sequence, 273 residues long: DnaJ homolog subfamily C member 27 (273 aa).

The segment at 1 to 18 (METNVPKRKEPAKSLRIK) is required for interaction with MAPK1. Residues 23–30 (GNAEVGKS), 71–75 (DMAGH), and 134–137 (NKID) each bind GTP. A J domain is found at 217 to 273 (DSWEMLGVRPGASREEVNKAYRKLAVLLHPDKCVAPGSEDAFKAVVNARTALLKNIK).

The protein belongs to the small GTPase superfamily. Rab family. Interacts directly with MAPK1 (wild-type and kinase-deficient forms). Interacts directly (in GTP-bound form) with MAP2K1 (wild-type and kinase-deficient forms).

The protein resides in the nucleus. Its function is as follows. GTPase which can activate the MEK/ERK pathway and induce cell transformation when overexpressed. May act as a nuclear scaffold for MAPK1, probably by association with MAPK1 nuclear export signal leading to enhanced ERK1/ERK2 signaling. The polypeptide is DnaJ homolog subfamily C member 27 (Dnajc27) (Mus musculus (Mouse)).